We begin with the raw amino-acid sequence, 511 residues long: Bifunctional purine biosynthesis protein PurH (511 aa).

The region spanning 1–146 (MARLALLSVS…KNFAHTTVLT (146 aa)) is the MGS-like domain.

This sequence belongs to the PurH family.

The enzyme catalyses (6R)-10-formyltetrahydrofolate + 5-amino-1-(5-phospho-beta-D-ribosyl)imidazole-4-carboxamide = 5-formamido-1-(5-phospho-D-ribosyl)imidazole-4-carboxamide + (6S)-5,6,7,8-tetrahydrofolate. It carries out the reaction IMP + H2O = 5-formamido-1-(5-phospho-D-ribosyl)imidazole-4-carboxamide. The protein operates within purine metabolism; IMP biosynthesis via de novo pathway; 5-formamido-1-(5-phospho-D-ribosyl)imidazole-4-carboxamide from 5-amino-1-(5-phospho-D-ribosyl)imidazole-4-carboxamide (10-formyl THF route): step 1/1. It functions in the pathway purine metabolism; IMP biosynthesis via de novo pathway; IMP from 5-formamido-1-(5-phospho-D-ribosyl)imidazole-4-carboxamide: step 1/1. This is Bifunctional purine biosynthesis protein PurH from Synechocystis sp. (strain ATCC 27184 / PCC 6803 / Kazusa).